The chain runs to 222 residues: Peptidyl-prolyl cis-trans isomerase FKBP7 (222 aa).

An N-terminal signal peptide occupies residues 1 to 23 (MPKTMHFLFRFIVFFYLWGLFTA). Asn-45 is a glycosylation site (N-linked (GlcNAc...) asparagine). Residues 53 to 145 (GDLLNAHYDG…IFEIELYAVT (93 aa)) enclose the PPIase FKBP-type domain. EF-hand domains are found at residues 145–180 (TKGP…EFEK) and 189–222 (YQDA…HDEL). The Ca(2+) site is built by Asp-158, Asp-160, Asp-162, Gln-164, Glu-169, Asp-202, Asp-204, Asp-206, and Glu-213. Positions 200 to 222 (KNDHDGDGFISPKEYNVYQHDEL) are disordered. The Retention in the endoplasmic reticulum motif lies at 219 to 222 (HDEL).

Glycosylated.

Its subcellular location is the endoplasmic reticulum lumen. It catalyses the reaction [protein]-peptidylproline (omega=180) = [protein]-peptidylproline (omega=0). In terms of biological role, PPIases accelerate the folding of proteins during protein synthesis. The protein is Peptidyl-prolyl cis-trans isomerase FKBP7 (FKBP7) of Homo sapiens (Human).